Here is a 281-residue protein sequence, read N- to C-terminus: Diaminopimelate epimerase (281 aa).

Residues Asn-11 and Asn-65 each coordinate substrate. Cys-74 (proton donor) is an active-site residue. Substrate-binding positions include 75–76 (GN), Asn-164, Asn-197, and 215–216 (ER). Catalysis depends on Cys-224, which acts as the Proton acceptor. A substrate-binding site is contributed by 225–226 (GT).

This sequence belongs to the diaminopimelate epimerase family. In terms of assembly, homodimer.

Its subcellular location is the cytoplasm. It catalyses the reaction (2S,6S)-2,6-diaminopimelate = meso-2,6-diaminopimelate. Its pathway is amino-acid biosynthesis; L-lysine biosynthesis via DAP pathway; DL-2,6-diaminopimelate from LL-2,6-diaminopimelate: step 1/1. Functionally, catalyzes the stereoinversion of LL-2,6-diaminopimelate (L,L-DAP) to meso-diaminopimelate (meso-DAP), a precursor of L-lysine and an essential component of the bacterial peptidoglycan. The polypeptide is Diaminopimelate epimerase (Heliobacterium modesticaldum (strain ATCC 51547 / Ice1)).